Consider the following 134-residue polypeptide: Ribonuclease VapC11 (134 aa).

In terms of domain architecture, PINc spans 2–126 (ILIDTSAWVE…ADFDVIARIT (125 aa)). Mg(2+)-binding residues include Asp5 and Asp98.

This sequence belongs to the PINc/VapC protein family. Mg(2+) serves as cofactor.

Toxic component of a type II toxin-antitoxin (TA) system. Acts as an RNase. Its toxic effects on cell growth and colony formation are neutralized by coexpression with cognate antitoxin VapB11. The polypeptide is Ribonuclease VapC11 (Mycobacterium tuberculosis (strain CDC 1551 / Oshkosh)).